The following is a 417-amino-acid chain: Cytochrome b-c1 complex subunit 2, mitochondrial (417 aa).

The N-terminal 22 residues, 1 to 22 (MTRGVPRLAVAARHFSTAEAAG), are a transit peptide targeting the mitochondrion.

The protein belongs to the peptidase M16 family. UQCRC2/QCR2 subfamily. Component of the ubiquinol-cytochrome c oxidoreductase (cytochrome b-c1 complex, complex III, CIII), a multisubunit enzyme composed of 3 respiratory subunits cytochrome b, cytochrome c1 and Rieske protein, 2 core protein subunits, and additional low-molecular weight protein subunits. The complex exists as an obligatory dimer and forms supercomplexes (SCs) in the inner mitochondrial membrane with cytochrome c oxidase (complex IV, CIV).

It localises to the mitochondrion inner membrane. Its function is as follows. Component of the ubiquinol-cytochrome c oxidoreductase, a multisubunit transmembrane complex that is part of the mitochondrial electron transport chain which drives oxidative phosphorylation. The respiratory chain contains 3 multisubunit complexes succinate dehydrogenase (complex II, CII), ubiquinol-cytochrome c oxidoreductase (cytochrome b-c1 complex, complex III, CIII) and cytochrome c oxidase (complex IV, CIV), that cooperate to transfer electrons derived from NADH and succinate to molecular oxygen, creating an electrochemical gradient over the inner membrane that drives transmembrane transport and the ATP synthase. The cytochrome b-c1 complex catalyzes electron transfer from ubiquinol to cytochrome c, linking this redox reaction to translocation of protons across the mitochondrial inner membrane, with protons being carried across the membrane as hydrogens on the quinol. In the process called Q cycle, 2 protons are consumed from the matrix, 4 protons are released into the intermembrane space and 2 electrons are passed to cytochrome c. The protein is Cytochrome b-c1 complex subunit 2, mitochondrial (QCR2) of Yarrowia lipolytica (strain CLIB 122 / E 150) (Yeast).